We begin with the raw amino-acid sequence, 322 residues long: Arginase-1 (322 aa).

The tract at residues 1–27 (MSSKPQSIGVIGAPFSKGQPRGGVEEG) is disordered. Ser-7 carries the phosphoserine modification. Lys-17 is modified (N6-succinyllysine). At Ser-62 the chain carries Phosphoserine. Lys-75 carries the N6-succinyllysine modification. Mn(2+) contacts are provided by His-101, Asp-124, His-126, and Asp-128. Residues 126 to 130 (HTDIN), 137 to 139 (TGN), and Asp-183 each bind substrate. A Phosphoserine modification is found at Ser-217. The Mn(2+) site is built by Asp-232 and Asp-234. 2 residues coordinate substrate: Thr-246 and Glu-277.

The protein belongs to the arginase family. In terms of assembly, homotrimer. Interacts with CMTM6. The cofactor is Mn(2+).

It is found in the cytoplasm. The catalysed reaction is L-arginine + H2O = urea + L-ornithine. Its pathway is nitrogen metabolism; urea cycle; L-ornithine and urea from L-arginine: step 1/1. This chain is Arginase-1 (ARG1), found in Bos taurus (Bovine).